A 133-amino-acid chain; its full sequence is Cytochrome b5 (133 aa).

Residues 4–86 form the Cytochrome b5 heme-binding domain; sequence EKEYILDEIS…LKNYLVGNFK (83 aa). Heme contacts are provided by H45 and H69. The helical transmembrane segment at 108–128 threads the bilayer; the sequence is SGTGIMLIVLMALFAIAYGYY.

This sequence belongs to the cytochrome b5 family. In terms of assembly, interacts with alternative squalene epoxidase PHATRDRAFT_45494.

The protein localises to the endoplasmic reticulum membrane. Hemoprotein that functions as an electron carrier for membrane bound monooxygenases involved in sterol biosynthesis. This is Cytochrome b5 from Phaeodactylum tricornutum (strain CCAP 1055/1).